The following is a 189-amino-acid chain: Nucleolar protein 16 (189 aa).

Residues 1 to 33 (MARDVKKRGKPAYTNRRNRQKYLKKKDNKKKLS) are compositionally biased toward basic residues. Residues 1-34 (MARDVKKRGKPAYTNRRNRQKYLKKKDNKKKLSK) form a disordered region.

The protein belongs to the NOP16 family.

Its subcellular location is the nucleus. It localises to the nucleolus. This Caenorhabditis elegans protein is Nucleolar protein 16.